We begin with the raw amino-acid sequence, 178 residues long: Major urinary protein 4 (178 aa).

Residues 1–16 form the signal peptide; the sequence is MKLLLCLGLTLVCIHA. The cysteines at positions 80 and 173 are disulfide-linked.

Belongs to the calycin superfamily. Lipocalin family. In terms of tissue distribution, expressed in lacrimal gland, parotid gland, sublingual gland, nasal mucus, and vomeronasal organ.

The protein resides in the secreted. In terms of biological role, binds pheromones, likely to displace pheromones complexed to urinary MUPs and transport them to the vomeronasal organ (VNO) where they associate with their neuronal receptor(s). MUP4 is highly specific for the male mouse pheromone 2-sec-butyl-4,5-dihydrothiazole (SBT). The sequence is that of Major urinary protein 4 (Mup4) from Mus musculus (Mouse).